The following is a 73-amino-acid chain: Small ribosomal subunit protein bS18 (73 aa).

Belongs to the bacterial ribosomal protein bS18 family. Part of the 30S ribosomal subunit. Forms a tight heterodimer with protein bS6.

In terms of biological role, binds as a heterodimer with protein bS6 to the central domain of the 16S rRNA, where it helps stabilize the platform of the 30S subunit. In Neorickettsia sennetsu (strain ATCC VR-367 / Miyayama) (Ehrlichia sennetsu), this protein is Small ribosomal subunit protein bS18.